A 513-amino-acid polypeptide reads, in one-letter code: Na(+)/H(+) antiporter NhaB (513 aa).

12 helical membrane-spanning segments follow: residues 23–43, 52–72, 97–117, 120–140, 144–164, 202–222, 238–258, 303–323, 348–368, 391–411, 447–467, and 475–495; these read LALI…PFVA, IFTL…LLAI, LLLM…LFIF, LLLS…AAAF, FLDA…FYGI, LMMH…VGEP, FFLR…LTCL, AIIG…VGLI, TESL…AVII, LFYI…VGTI, ATPN…APLI, and VWMA…CVEF.

It belongs to the NhaB Na(+)/H(+) (TC 2.A.34) antiporter family.

The protein localises to the cell inner membrane. The enzyme catalyses 2 Na(+)(in) + 3 H(+)(out) = 2 Na(+)(out) + 3 H(+)(in). In terms of biological role, na(+)/H(+) antiporter that extrudes sodium in exchange for external protons. The protein is Na(+)/H(+) antiporter NhaB of Escherichia coli O6:H1 (strain CFT073 / ATCC 700928 / UPEC).